The sequence spans 466 residues: ATP synthase subunit beta (466 aa).

Gly-156–Thr-163 provides a ligand contact to ATP.

It belongs to the ATPase alpha/beta chains family. F-type ATPases have 2 components, CF(1) - the catalytic core - and CF(0) - the membrane proton channel. CF(1) has five subunits: alpha(3), beta(3), gamma(1), delta(1), epsilon(1). CF(0) has three main subunits: a(1), b(2) and c(9-12). The alpha and beta chains form an alternating ring which encloses part of the gamma chain. CF(1) is attached to CF(0) by a central stalk formed by the gamma and epsilon chains, while a peripheral stalk is formed by the delta and b chains.

It is found in the cell inner membrane. The catalysed reaction is ATP + H2O + 4 H(+)(in) = ADP + phosphate + 5 H(+)(out). Its function is as follows. Produces ATP from ADP in the presence of a proton gradient across the membrane. The catalytic sites are hosted primarily by the beta subunits. This Polynucleobacter necessarius subsp. necessarius (strain STIR1) protein is ATP synthase subunit beta.